We begin with the raw amino-acid sequence, 102 residues long: uncharacterized protein (102 aa).

A run of 2 helical transmembrane segments spans residues 28 to 48 and 81 to 101; these read YLNL…LISI and LSVL…AGIG.

The protein localises to the membrane. This is an uncharacterized protein from Saccharomyces cerevisiae (strain ATCC 204508 / S288c) (Baker's yeast).